An 80-amino-acid polypeptide reads, in one-letter code: MGLTGLGKIVSQIIRQIAHGLEYVGDKVSHYIRLALHYLYEFAKAFYHYLGKLYDTFQRDPIRFLQFAGSLAIMTYYGVL.

This is an uncharacterized protein from Acidianus sp. F28 (AFV-2).